The chain runs to 626 residues: MSNELDFRSVRLLKNDPVNLQKFSYTSEDEAWKTYLENPLTAATKAMMRVNGDDDSVAALSFLYDYYMGPKEKRILSSSTGGRNDQGKRYYHGMEYETDLTPLESPTHLMKFLTENVSGTPEYPDLLKKNNLMSLEGALPTPGKAAPLPAGPSKLEAGSVDSYLLPTTDMYDNGSLNSLFESIHGVPPTQRWQPDSTFKDDPQESMLFPDILKTSPEPPCPEDYPSLKSDFEYTLGSPKAIHIKSGESPMAYLNKGQFYPVTLRTPAGGKGLALSSNKVKSVVMVVFDNEKVPVEQLRFWKHWHSRQPTAKQRVIDVADCKENFNTVEHIEEVAYNALSFVWNVNEEAKVFIGVNCLSTDFSSQKGVKGVPLNLQIDTYDCGLGTERLVHRAVCQIKIFCDKGAERKMRDDERKQFRRKVKCPDSSNSGVKGCLLSGFRGNETTYLRPETDLETPPVLFIPNVHFSSLQRSGGAAPSAGPSSSNRLPLKRTCSPFTEEFEPLPSKQAKEGDLQRVLLYVRRETEEVFDALMLKTPDLKGLRNAISEKYGFPEENIYKVYKKCKRGETSLLHPRLSRHPPPDCLECSHPVTQVRNMGFGDGFWRQRDLDSNPSPTTVNSLHFTVNSE.

Residues 30-95 (EAWKTYLENP…QGKRYYHGME (66 aa)) are transcription activation. A Grh/CP2 DB domain is found at 226-460 (SLKSDFEYTL…DLETPPVLFI (235 aa)).

The protein belongs to the grh/CP2 family. Grainyhead subfamily. As to quaternary structure, homodimer, also forms heterodimers with GRHL1 and GRHL2. Interacts with LMO4. In terms of tissue distribution, expressed in brain, colon, pancreas, placenta and kidney. Isoform 1 is expressed in lung and tonsil. Isoform 2 is prostate-specific.

It is found in the nucleus. In terms of biological role, transcription factor playing important roles in primary neurulation and in the differentiation of stratified epithelia of both ectodermal and endodermal origin. Binds directly to the consensus DNA sequence 5'-AACCGGTT-3' acting as an activator and repressor on distinct target genes. xhibits functional redundancy with GRHL2 in epidermal morphogenetic events and epidermal wound repair. Exhibits functional redundancy with GRHL2 in epidermal morphogenetic events and epidermal wound repair but is essential to form the epidermal barrier with TGM3 as critical direct target gene among others. Despite being dispensable during normal epidermal homeostasis in the adulthood, is again required for barrier repair after immune-mediated epidermal damage, regulates distinct gene batteries in embryonic epidermal differentiation and adult epidermal barrier reformation after injury. Plays unique and cooperative roles with GRHL2 in establishing distinct zones of primary neurulation. Essential for spinal closure, functions cooperatively with GRHL2 in closure 2 (forebrain/midbrain boundary) and posterior neuropore closure. Also required for proper development of the oral periderm. No genetic interaction with GRHL3, no functional cooperativity due to diverse target gene selectivity. This is Grainyhead-like protein 3 homolog from Homo sapiens (Human).